Here is a 172-residue protein sequence, read N- to C-terminus: Putative phosphoesterase BAMEG_3349 (172 aa).

Catalysis depends on His34, which acts as the Proton donor. Short sequence motifs (HXTX) lie at residues 34–37 (HITL) and 115–118 (HLTI). His115 (proton acceptor) is an active-site residue.

This sequence belongs to the 2H phosphoesterase superfamily. YjcG family.

The sequence is that of Putative phosphoesterase BAMEG_3349 from Bacillus anthracis (strain CDC 684 / NRRL 3495).